Reading from the N-terminus, the 141-residue chain is 3-hydroxyacyl-[acyl-carrier-protein] dehydratase FabZ (141 aa).

His-48 is a catalytic residue.

Belongs to the thioester dehydratase family. FabZ subfamily.

The protein resides in the cytoplasm. It carries out the reaction a (3R)-hydroxyacyl-[ACP] = a (2E)-enoyl-[ACP] + H2O. Functionally, involved in unsaturated fatty acids biosynthesis. Catalyzes the dehydration of short chain beta-hydroxyacyl-ACPs and long chain saturated and unsaturated beta-hydroxyacyl-ACPs. This Streptococcus thermophilus (strain CNRZ 1066) protein is 3-hydroxyacyl-[acyl-carrier-protein] dehydratase FabZ.